The sequence spans 642 residues: MSRIDYRSIGLKVGLEIHQQLDTREKLFCSCPAELGEEEHDEFVRQLRPTRSELGDVDPAALFEWRKGRLYIYQAPLNHSCLVEADEEPPHPINREAVAVAVAVAKALGSAIVDEVHVMRKTVIDGSNTSGFQRTAIVALGGSIRVGSKEVPIETIVIEEDAARKVGEKGRYVVYRLDRLGIPLIEIATAPVIESPGEAREVALAIGTMLRLTGKVKRGLGTIRQDLNVSIRGGAKTEIKGVQRLELIPRVIEYEVLRQLSLLRIRDMLRERGVSREELENVEPVDVSSLLAGSKSRVIKKVLSSGGKVIAVKLPRMKGIIGMEIMPGRRFGTELADYARFWGGVGGIIHSDELPGYGITGDEVEKIYEAVGGDPGVDAFALVADKPSNALRAARAVLERVAAALEGVPEETRAALEDGTTRYLRPRPGSARMYPETDIPPLRIDENILSMAEPLVPEPPEVVAMRLKKEYGLSDQLAWEVIRDERYRLIVSLLEKYRGTLEPSYVAGFFVVVLRGLEGEGVEVWKVDDAILEKILDMVAQGEIAREAAAELVKYLANNPGSTVEEAVEKLGLRRLSREEVERIVDEIVGGLREEILKRGEKAVGLVMGRAMAKLRGRADGRLVSEIVSRKIREILDSDGKG.

The protein belongs to the GatB/GatE family. GatE subfamily. As to quaternary structure, heterodimer of GatD and GatE.

The catalysed reaction is L-glutamyl-tRNA(Gln) + L-glutamine + ATP + H2O = L-glutaminyl-tRNA(Gln) + L-glutamate + ADP + phosphate + H(+). Functionally, allows the formation of correctly charged Gln-tRNA(Gln) through the transamidation of misacylated Glu-tRNA(Gln) in organisms which lack glutaminyl-tRNA synthetase. The reaction takes place in the presence of glutamine and ATP through an activated gamma-phospho-Glu-tRNA(Gln). The GatDE system is specific for glutamate and does not act on aspartate. This is Glutamyl-tRNA(Gln) amidotransferase subunit E from Aeropyrum pernix (strain ATCC 700893 / DSM 11879 / JCM 9820 / NBRC 100138 / K1).